Consider the following 253-residue polypeptide: Probable transcriptional regulatory protein Tery_2125 (253 aa).

This sequence belongs to the TACO1 family.

The protein resides in the cytoplasm. The chain is Probable transcriptional regulatory protein Tery_2125 from Trichodesmium erythraeum (strain IMS101).